The following is a 146-amino-acid chain: MKIMVINGPNLNMVGVREKGIYGAKSFEDICEYIKEEGKKRGHEITLFQSNCEGEIIDELQKAYFENYDGIIINPGAYTHYSYAIHDAIKGINIDTVEVHLSNVHAREDFRKKSVTAPACIGQMCGFGEDGYILAIKALELKKMSK.

Tyrosine 22 functions as the Proton acceptor in the catalytic mechanism. Residues asparagine 74, histidine 80, and aspartate 87 each coordinate substrate. Histidine 100 serves as the catalytic Proton donor. Residues 101 to 102 (LS) and arginine 111 contribute to the substrate site.

Belongs to the type-II 3-dehydroquinase family. As to quaternary structure, homododecamer.

It carries out the reaction 3-dehydroquinate = 3-dehydroshikimate + H2O. It functions in the pathway metabolic intermediate biosynthesis; chorismate biosynthesis; chorismate from D-erythrose 4-phosphate and phosphoenolpyruvate: step 3/7. Catalyzes a trans-dehydration via an enolate intermediate. The chain is 3-dehydroquinate dehydratase from Clostridium beijerinckii (strain ATCC 51743 / NCIMB 8052) (Clostridium acetobutylicum).